A 560-amino-acid chain; its full sequence is MQRRIAFSLLLLLPFASPALADSACPDWTAQRAAAELAALAERLRQWDVAYHRDGRSPVADELYDQARARLADWNRCFPGQADASPEPLAGSAGPLLHPVPHTGLAKLDEAAVRDWMATREDLWTQPKVDGVAVTLEYADGRLRRAISRGDGRHGQDWTARVRRLPALPRQLAERRRLILQGELYWRLPGHVQAEAGGRSARARVAGLLARDTLDDGDAAGIGLFVWDWPNGPADMRARLDGLERLGFAEARRYSRPVADFATARQWRERWYREPLPFASDGVVLRQGRRPPGERWRAEPPHWAVAWKYPLAQALAEVRAVRFRIGRSGRITPQLELQPVRLDDRQIRRVALGSLRRWRELDVRPGDQVAIRLAGQSIPQVDAVVWRAAERPALPSPDPAAHHALSCWRPLPGCEEQFLARLDWLGGRRGLDLRGVGRGTWEALLENGRLDDLLGWLELDEARLAELPGFGERSASLLAERFRAARRRPFPMWLRALGLPPAGEATLPPSWDELAGRGPEQWQREPGIGPGRARQLQAFFAHPEVQALRQRLRAAGVEGF.

Residue K128 is the N6-AMP-lysine intermediate of the active site.

Belongs to the NAD-dependent DNA ligase family. LigB subfamily.

The catalysed reaction is NAD(+) + (deoxyribonucleotide)n-3'-hydroxyl + 5'-phospho-(deoxyribonucleotide)m = (deoxyribonucleotide)n+m + AMP + beta-nicotinamide D-nucleotide.. Its function is as follows. Catalyzes the formation of phosphodiester linkages between 5'-phosphoryl and 3'-hydroxyl groups in double-stranded DNA using NAD as a coenzyme and as the energy source for the reaction. The sequence is that of DNA ligase B from Azotobacter vinelandii (strain DJ / ATCC BAA-1303).